Here is a 476-residue protein sequence, read N- to C-terminus: Protein transport protein Sec61 subunit alpha isoform 2 (476 aa).

Topologically, residues 1-32 (MGIKFLEVIKPFCAVLPEIQKPERKIQFREKV) are cytoplasmic. A helical membrane pass occupies residues 33 to 53 (LWTAITLFIFLVCCQIPLFGI). The Lumenal segment spans residues 54–75 (MSSDSADPFYWMRVILASNRGT). The helical transmembrane segment at 76-96 (LMELGISPIVTSGLIMQLLAG) threads the bilayer. Topologically, residues 97-117 (AKIIEVGDTPKDRALFNGAQK) are cytoplasmic. Residues 118–138 (LFGMIITIGQAIVYVMTGMYG) traverse the membrane as a helical segment. The Lumenal portion of the chain corresponds to 139–144 (DPAEMG). A helical membrane pass occupies residues 145–165 (AGICLLIIIQLFVAGLIVLLL). Residues 166–172 (DELLQKG) lie on the Cytoplasmic side of the membrane. Residues 173 to 193 (YGLGSGISLFIATNICETIVW) form a helical membrane-spanning segment. The Lumenal portion of the chain corresponds to 194-240 (KASSPTTINTGRGTEFEGAVIALFHLLATRTDKVRALREAFYRQNLP). Residues 241 to 261 (NLMNLIATVFVFAVVIYFQGF) traverse the membrane as a helical segment. Topologically, residues 262–288 (RVDLPIKSARYRGQYSSYPIKLFYTSN) are cytoplasmic. Residues 289 to 309 (IPIILQSALVSNLYVISQMLS) traverse the membrane as a helical segment. The Lumenal segment spans residues 310 to 353 (VRFSGNFLVNLLGQWADVSGGGPARSYPVGGLCYYLSPPESMGA). The chain crosses the membrane as a helical span at residues 354 to 374 (ILEDPVHVVVYIIFMLGSCAF). The Cytoplasmic segment spans residues 375–420 (FSKTWIEVSGSSAKDVAKQLKEQQMVMRGHRDTSMVHELNRYIPTA). 2 helical membrane-spanning segments follow: residues 421–441 (AAFGGLCIGALSVLADFLGAI) and 442–462 (GSGTGILLAVTIIYQYFEIFV). Residues 463-476 (KEQAEVGGMGALFF) are Cytoplasmic-facing.

Belongs to the SecY/SEC61-alpha family. In terms of assembly, the SEC61 channel-forming translocon complex consists of channel-forming core components SEC61A1, SEC61B and SEC61G and different auxiliary components such as SEC62 and SEC63.

The protein localises to the endoplasmic reticulum membrane. Component of SEC61 channel-forming translocon complex that mediates transport of signal peptide-containing precursor polypeptides across the endoplasmic reticulum (ER). Forms a ribosome receptor and a gated pore in the ER membrane, both functions required for cotranslational translocation of nascent polypeptides. In Pongo abelii (Sumatran orangutan), this protein is Protein transport protein Sec61 subunit alpha isoform 2 (SEC61A2).